Consider the following 110-residue polypeptide: Large ribosomal subunit protein uL22 (110 aa).

Belongs to the universal ribosomal protein uL22 family. In terms of assembly, part of the 50S ribosomal subunit.

This protein binds specifically to 23S rRNA; its binding is stimulated by other ribosomal proteins, e.g. L4, L17, and L20. It is important during the early stages of 50S assembly. It makes multiple contacts with different domains of the 23S rRNA in the assembled 50S subunit and ribosome. Its function is as follows. The globular domain of the protein is located near the polypeptide exit tunnel on the outside of the subunit, while an extended beta-hairpin is found that lines the wall of the exit tunnel in the center of the 70S ribosome. The polypeptide is Large ribosomal subunit protein uL22 (Exiguobacterium sp. (strain ATCC BAA-1283 / AT1b)).